Consider the following 827-residue polypeptide: NT-3 growth factor receptor (827 aa).

The first 31 residues, Met-1–Ala-31, serve as a signal peptide directing secretion. Disulfide bonds link Cys-32–Cys-38 and Cys-36–Cys-45. Residues Cys-32–Asp-430 are Extracellular-facing. 3 N-linked (GlcNAc...) asparagine glycosylation sites follow: Asn-68, Asn-72, and Asn-79. LRR repeat units lie at residues Gly-104 to Lys-125 and His-128 to Thr-149. The LRRCT domain occupies Asn-160–Leu-209. A glycan (N-linked (GlcNAc...) asparagine) is linked at Asn-163. 2 disulfide bridges follow: Cys-164-Cys-189 and Cys-166-Cys-207. Residues Asn-203, Asn-218, Asn-232, Asn-259, Asn-267, Asn-272, and Asn-294 are each glycosylated (N-linked (GlcNAc...) asparagine). Ig-like C2-type domains are found at residues Pro-210–Thr-300 and His-319–Asn-382. Residues Cys-231 and Cys-284 are joined by a disulfide bond. The cysteines at positions 320 and 362 are disulfide-linked. 2 N-linked (GlcNAc...) asparagine glycosylation sites follow: Asn-375 and Asn-388. Residues Thr-431–Ile-455 form a helical membrane-spanning segment. The Cytoplasmic segment spans residues Asn-456–Gly-827. Residue Tyr-518 is modified to Phosphotyrosine; by autocatalysis. One can recognise a Protein kinase domain in the interval Ile-540–Leu-812. ATP contacts are provided by residues Leu-546–Val-554 and Lys-574. The active-site Proton acceptor is Asp-681. 4 positions are modified to phosphotyrosine; by autocatalysis: Tyr-707, Tyr-711, Tyr-712, and Tyr-822.

This sequence belongs to the protein kinase superfamily. Tyr protein kinase family. Insulin receptor subfamily. As to quaternary structure, exists in a dynamic equilibrium between monomeric (low affinity) and dimeric (high affinity) structures. Interacts with PTPRS. Ligand-mediated auto-phosphorylation.

It is found in the membrane. It carries out the reaction L-tyrosyl-[protein] + ATP = O-phospho-L-tyrosyl-[protein] + ADP + H(+). Functionally, receptor tyrosine kinase involved in nervous system and probably heart development. Upon binding of its ligand NTF3/neurotrophin-3, NTRK3 autophosphorylates and activates different signaling pathways, including the phosphatidylinositol 3-kinase/AKT and the MAPK pathways, that control cell survival and differentiation. The KT and KD isoforms fail to stimulate transformation, process outgrowth or survival. Isoform KI25 exhibits tyrosine phosphorylation in the absence of ligand and is unable to mediate survival of neuronal cells. The polypeptide is NT-3 growth factor receptor (NTRK3) (Gallus gallus (Chicken)).